A 435-amino-acid polypeptide reads, in one-letter code: D-amino acid dehydrogenase (435 aa).

3-17 (VLILGSGVIGTTSAW) serves as a coordination point for FAD.

This sequence belongs to the DadA oxidoreductase family. FAD is required as a cofactor.

The catalysed reaction is a D-alpha-amino acid + A + H2O = a 2-oxocarboxylate + AH2 + NH4(+). Its pathway is amino-acid degradation; D-alanine degradation; NH(3) and pyruvate from D-alanine: step 1/1. Oxidative deamination of D-amino acids. This chain is D-amino acid dehydrogenase, found in Xylella fastidiosa (strain M23).